Reading from the N-terminus, the 686-residue chain is DNA ligase (686 aa).

NAD(+) is bound by residues 45-49 (DNEYD), 94-95 (SL), and glutamate 127. Lysine 129 acts as the N6-AMP-lysine intermediate in catalysis. 4 residues coordinate NAD(+): arginine 150, glutamate 187, lysine 302, and lysine 326. Positions 420, 423, 438, and 444 each coordinate Zn(2+). The BRCT domain maps to 605–686 (LDNLPLEGQT…DEFLKMIGAS (82 aa)).

Belongs to the NAD-dependent DNA ligase family. LigA subfamily. Mg(2+) is required as a cofactor. Mn(2+) serves as cofactor.

The catalysed reaction is NAD(+) + (deoxyribonucleotide)n-3'-hydroxyl + 5'-phospho-(deoxyribonucleotide)m = (deoxyribonucleotide)n+m + AMP + beta-nicotinamide D-nucleotide.. DNA ligase that catalyzes the formation of phosphodiester linkages between 5'-phosphoryl and 3'-hydroxyl groups in double-stranded DNA using NAD as a coenzyme and as the energy source for the reaction. It is essential for DNA replication and repair of damaged DNA. The polypeptide is DNA ligase (Psychrobacter sp. (strain PRwf-1)).